A 168-amino-acid chain; its full sequence is Nicotinamide-nucleotide adenylyltransferase (168 aa).

This sequence belongs to the archaeal NMN adenylyltransferase family.

The protein resides in the cytoplasm. The catalysed reaction is beta-nicotinamide D-ribonucleotide + ATP + H(+) = diphosphate + NAD(+). It participates in cofactor biosynthesis; NAD(+) biosynthesis; NAD(+) from nicotinamide D-ribonucleotide: step 1/1. The polypeptide is Nicotinamide-nucleotide adenylyltransferase (Methanoculleus marisnigri (strain ATCC 35101 / DSM 1498 / JR1)).